The primary structure comprises 386 residues: Palmitoyltransferase ZDHHC9 (386 aa).

Residues 1-35 lie on the Cytoplasmic side of the membrane; sequence MSAVMITRKITRKWEKLPGKNTFCCDGRVMMARQK. The helical transmembrane segment at 36 to 56 threads the bilayer; sequence GVFYLTLFLIVGTCSLFFAFE. Residues 57–63 lie on the Lumenal side of the membrane; that stretch reads CPYLAVH. A helical membrane pass occupies residues 64–84; the sequence is LSPAIPVFAVLLFVFVMAMLL. The Cytoplasmic portion of the chain corresponds to 85-183; sequence RTSFSDPGVL…NCVGKRNYRY (99 aa). The 51-residue stretch at 139 to 189 folds into the DHHC domain; sequence KYCYTCKIFRPPRASHCSICDNCVDRFDHHCPWVGNCVGKRNYRYFYLFTL. C169 serves as the catalytic S-palmitoyl cysteine intermediate. The chain crosses the membrane as a helical span at residues 184-204; sequence FYLFTLSLSLLTIYIFAFDIV. Over 205–224 the chain is Lumenal; sequence HVVLRSVDSGFVNTLKETPG. A helical membrane pass occupies residues 225 to 245; sequence TVLEVLVCFFTLWSVVGLTGF. Over 246–386 the chain is Cytoplasmic; the sequence is HTYLISLNQT…APAVIKESTH (141 aa). The segment covering 306–334 has biased composition (polar residues); it reads SCSSAPSNGATTVPVNKSSNPATQTTKSS. The disordered stretch occupies residues 306–386; that stretch reads SCSSAPSNGA…APAVIKESTH (81 aa).

It belongs to the DHHC palmitoyltransferase family. ERF2/ZDHHC9 subfamily.

It localises to the endoplasmic reticulum membrane. It is found in the golgi apparatus membrane. It catalyses the reaction L-cysteinyl-[protein] + hexadecanoyl-CoA = S-hexadecanoyl-L-cysteinyl-[protein] + CoA. Functionally, palmitoyltransferase that catalyzes the addition of palmitate onto various protein substrates, such as ADRB2, GSDMD, HRAS, NRAS and CGAS. This Danio rerio (Zebrafish) protein is Palmitoyltransferase ZDHHC9.